Here is a 185-residue protein sequence, read N- to C-terminus: Elongation factor P (185 aa).

Belongs to the elongation factor P family.

It localises to the cytoplasm. It functions in the pathway protein biosynthesis; polypeptide chain elongation. Its function is as follows. Involved in peptide bond synthesis. Stimulates efficient translation and peptide-bond synthesis on native or reconstituted 70S ribosomes in vitro. Probably functions indirectly by altering the affinity of the ribosome for aminoacyl-tRNA, thus increasing their reactivity as acceptors for peptidyl transferase. The sequence is that of Elongation factor P from Azoarcus sp. (strain BH72).